The chain runs to 698 residues: MSFLKLTKSIQKINNFNNNKINLINKYFSTTNINNSGGGGNIKLNDGRIFKFEDKQTPLTIANKINKTIGKQSILSRLNGNKLISMKEIIEMSGKDYNIEFLNFEEHSDARICFWNSSSLVLARATMEYFKNENKEIELINFGHLVNPQTADNINQGTFYIDIFFKDKNQTIKDNDINKIKKIMEYIVKRNDKFEILKNDQQDQDQDQEESFIKFGEFKFKNNFLTIDSSNSIVSLDLIKNSSVVGPNKEYSELQRIVGISFPSKDQMNNWVEIQKIAALRDHRVIGKDQELFFFHPFSPGSCFFLPHGTKIYNKLLQFLRLEYRKRGYQEVISPNIYNQKLWETSGHWDNYKDNMFSFECDHTQYSLKPMNCPGHCLMYAHRARSYKELPMRIADFGVLHRNETHGSLSGLTRVRRFQQDDAHIFCTPDMIREEIKQCLDFMKYVYTIFNFTFHLELSTRPDSYLGELSVWEKAETSLSQVLTEFCGDKWTINHGDGAFYGPKIDIHLKDANGKNHQCATIQLDFQLPIRFNLEYSGGLNNNNNNNNNNEEINDNNNNNSLNRPVMIHRALFGSVERMMAILMEHTAGKWPFWLSPRQCIVIPVSNKFNQFAQEIQSKINLAGYDVDVDLNDSKLLSKKIREATVSQYNYIIVVGQEEIDTNILNVRKRDLPEDNKQVKLSLNDLFSEFKLNIEQFK.

One can recognise a TGS domain in the interval 38-100; it reads GGGNIKLNDG…EMSGKDYNIE (63 aa). The segment at 541–560 is disordered; it reads NNNNNNNNNNEEINDNNNNN.

It belongs to the class-II aminoacyl-tRNA synthetase family.

It localises to the cytoplasm. The enzyme catalyses tRNA(Thr) + L-threonine + ATP = L-threonyl-tRNA(Thr) + AMP + diphosphate + H(+). The chain is Probable threonine--tRNA ligase 2, cytoplasmic (thrS2) from Dictyostelium discoideum (Social amoeba).